The following is a 202-amino-acid chain: Ribonuclease HII (202 aa).

The RNase H type-2 domain occupies 12–201 (LLIAGVDEAG…VRQLKLFIPE (190 aa)). A divalent metal cation is bound by residues Asp-18, Glu-19, and Asp-110.

This sequence belongs to the RNase HII family. The cofactor is Mn(2+). Mg(2+) serves as cofactor.

The protein resides in the cytoplasm. It catalyses the reaction Endonucleolytic cleavage to 5'-phosphomonoester.. In terms of biological role, endonuclease that specifically degrades the RNA of RNA-DNA hybrids. This Coxiella burnetii (strain CbuG_Q212) (Coxiella burnetii (strain Q212)) protein is Ribonuclease HII.